A 194-amino-acid chain; its full sequence is Ion-translocating oxidoreductase complex subunit B (194 aa).

Positions Met-1–Ser-26 are hydrophobic. In terms of domain architecture, 4Fe-4S spans Glu-32–Val-90. [4Fe-4S] cluster is bound by residues Cys-49, Cys-52, Cys-57, Cys-73, Cys-114, Cys-117, Cys-120, Cys-124, Cys-144, Cys-147, Cys-150, and Cys-154. 2 4Fe-4S ferredoxin-type domains span residues Lys-105–Lys-134 and Ala-135–Val-164.

This sequence belongs to the 4Fe4S bacterial-type ferredoxin family. RnfB subfamily. The complex is composed of six subunits: RnfA, RnfB, RnfC, RnfD, RnfE and RnfG. It depends on [4Fe-4S] cluster as a cofactor.

The protein localises to the cell inner membrane. Functionally, part of a membrane-bound complex that couples electron transfer with translocation of ions across the membrane. The polypeptide is Ion-translocating oxidoreductase complex subunit B (Aliivibrio salmonicida (strain LFI1238) (Vibrio salmonicida (strain LFI1238))).